The chain runs to 72 residues: Translation initiation factor IF-1 (72 aa).

An S1-like domain is found at 1–72; that stretch reads MAKEDNIEMQ…SKGRIVFRSR (72 aa).

Belongs to the IF-1 family. Component of the 30S ribosomal translation pre-initiation complex which assembles on the 30S ribosome in the order IF-2 and IF-3, IF-1 and N-formylmethionyl-tRNA(fMet); mRNA recruitment can occur at any time during PIC assembly.

It localises to the cytoplasm. Functionally, one of the essential components for the initiation of protein synthesis. Stabilizes the binding of IF-2 and IF-3 on the 30S subunit to which N-formylmethionyl-tRNA(fMet) subsequently binds. Helps modulate mRNA selection, yielding the 30S pre-initiation complex (PIC). Upon addition of the 50S ribosomal subunit IF-1, IF-2 and IF-3 are released leaving the mature 70S translation initiation complex. This is Translation initiation factor IF-1 from Shewanella loihica (strain ATCC BAA-1088 / PV-4).